A 417-amino-acid polypeptide reads, in one-letter code: Methyltransferase/ribosomally synthesized cyclic peptide dendrothelin A precursor dbihMA (417 aa).

A methyltransferase domain region spans residues 1–251; the sequence is MESSTQTKPG…GVSTFYIPPK (251 aa). Residues R72, Y76, and Y98 contribute to the active site. Residues Y98, H100, V103, A130, Q172, A213, S244, and T245 each coordinate S-adenosyl-L-methionine. Positions 252–378 are clasp domain; the sequence is ARKDINTDII…WAIRCAMKNM (127 aa). The segment at 379–399 is precursor leader; that stretch reads PSSLLEAASQSVEEASMNGFP. 2 positions are modified to N-methylvaline: V401 and V403. T404 carries the N-methylthreonine modification. An N-methylglycine modification is found at G405. N-methylisoleucine is present on I406. An N-methylvaline modification is found at V407. G408 bears the N-methylglycine mark. The residue at position 410 (I410) is an N-methylisoleucine. At G411 the chain carries N-methylglycine. At V413 the chain carries N-methylvaline.

It in the N-terminal section; belongs to the precorrin methyltransferase family. Homodimer. In terms of processing, dbiMA automethylates at Val-401, Val-403, Thr-404, Gly-405, Ile-406, Val-407, Gly-408, Ile-410, Gly-411 and Val-413 before being processed by the prolyloligopeptidase dbiP which likely forms a peptidyl ester upon removal of the follower propeptide, which then undergoes macrocyclization with the N-terminus of the modified core peptide. Peptide backbone alpha-N-methylations change the physicochemical properties of amide bonds to provide structural constraints and other favorable characteristics including biological membrane permeability to peptides.

It participates in mycotoxin biosynthesis. Fusion protein of the methyltransferase dbiM and the dendrothelin core peptide; part of the gene cluster that mediates the biosynthesis of dendrothelin A, a highly methylated cyclic dodecapeptide showing slight nematodicidal activity. Dendrothelin A derives from the C-terminus of the dbiMA protein, and it is the dbiMA protein that methylates its own C-terminus using S-adenosyl methionine (SAM). The C-terminus is subsequently cleaved off and macrocyclized by the prolyloligopeptidase dbiP to give the final product. The polypeptide is Methyltransferase/ribosomally synthesized cyclic peptide dendrothelin A precursor dbihMA (Dendrothele bispora (strain CBS 962.96)).